The primary structure comprises 356 residues: Glutamine synthetase cytosolic isozyme 1-1 (356 aa).

Serine 2 carries the N-acetylserine modification. Serine 2 and serine 48 each carry phosphoserine. Residues 19–99 (IIAEYIWVGG…VMCDAYTPAG (81 aa)) form the GS beta-grasp domain. Positions 36-62 (KARTLPGPVTDPSQLPKWNYDGSSTGQ) are disordered. One can recognise a GS catalytic domain in the interval 106–356 (KRHAAAKVFS…IAETTILWNP (251 aa)).

The protein belongs to the glutamine synthetase family. Homooctamer. Interacts with CRK3 and GRF3. In terms of processing, phosphorylated by CRK3. As to expression, expressed in root tips, root hairs and epidermis. Ubiquitously expressed with higher levels in siliques and roots.

The protein localises to the cytoplasm. The catalysed reaction is L-glutamate + NH4(+) + ATP = L-glutamine + ADP + phosphate + H(+). Functionally, high-affinity glutamine synthetase which catalyzes the synthesis of glutamine from ammonium and glutamate. May contribute to the homeostatic control of glutamine synthesis in roots. This is Glutamine synthetase cytosolic isozyme 1-1 (GLN1-1) from Arabidopsis thaliana (Mouse-ear cress).